The primary structure comprises 133 residues: Helix-loop-helix protein 1 (133 aa).

A disordered region spans residues 1–78; that stretch reads MMLNSDTMEL…RRRATAKYRT (78 aa). Gly residues predominate over residues 25–39; it reads DCGGGPGPDGAGSGD. A compositionally biased stretch (basic and acidic residues) spans 52–65; sequence ESGRKDLQHLSREE. Over residues 66-78 the composition is skewed to basic residues; that stretch reads RRRRRRATAKYRT. The 53-residue stretch at 75 to 127 folds into the bHLH domain; sequence KYRTAHATRERIRVEAFNLAFAELRKLLPTLPPDKKLSKIEILRLAICYISYL.

Efficient DNA binding requires dimerization with another bHLH protein.

The protein resides in the nucleus. May serve as DNA-binding protein and may be involved in the control of cell-type determination, possibly within the developing nervous system. This Mus musculus (Mouse) protein is Helix-loop-helix protein 1 (Nhlh1).